Here is a 479-residue protein sequence, read N- to C-terminus: ATP synthase subunit beta (479 aa).

An ATP-binding site is contributed by 153–160 (GGAGVGKT).

The protein belongs to the ATPase alpha/beta chains family. In terms of assembly, F-type ATPases have 2 components, CF(1) - the catalytic core - and CF(0) - the membrane proton channel. CF(1) has five subunits: alpha(3), beta(3), gamma(1), delta(1), epsilon(1). CF(0) has three main subunits: a(1), b(2) and c(9-12). The alpha and beta chains form an alternating ring which encloses part of the gamma chain. CF(1) is attached to CF(0) by a central stalk formed by the gamma and epsilon chains, while a peripheral stalk is formed by the delta and b chains.

Its subcellular location is the cell membrane. The enzyme catalyses ATP + H2O + 4 H(+)(in) = ADP + phosphate + 5 H(+)(out). With respect to regulation, increases 2-fold following exposure to low pH. Produces ATP from ADP in the presence of a proton gradient across the membrane. The catalytic sites are hosted primarily by the beta subunits. The sequence is that of ATP synthase subunit beta from Lactobacillus acidophilus (strain ATCC 700396 / NCK56 / N2 / NCFM).